A 542-amino-acid chain; its full sequence is CTP synthase (542 aa).

Residues 1 to 265 (MARYIFITGG…DQEVLAAFGI (265 aa)) form an amidoligase domain region. Position 13 (serine 13) interacts with CTP. Serine 13 contacts UTP. 14–19 (SLGKGL) is an ATP binding site. Tyrosine 54 serves as a coordination point for L-glutamine. Residue aspartate 71 participates in ATP binding. Mg(2+) contacts are provided by aspartate 71 and glutamate 139. CTP-binding positions include 146–148 (DIE), 186–191 (KTKPTQ), and lysine 222. UTP-binding positions include 186 to 191 (KTKPTQ) and lysine 222. 238 to 240 (RDV) lines the ATP pocket. One can recognise a Glutamine amidotransferase type-1 domain in the interval 291 to 541 (TIAIVGKYTG…IAAALEQSRL (251 aa)). Glycine 353 contributes to the L-glutamine binding site. Catalysis depends on cysteine 380, which acts as the Nucleophile; for glutamine hydrolysis. Residues 381 to 384 (FGMQ), glutamate 404, and arginine 469 each bind L-glutamine. Active-site residues include histidine 514 and glutamate 516.

This sequence belongs to the CTP synthase family. In terms of assembly, homotetramer.

The enzyme catalyses UTP + L-glutamine + ATP + H2O = CTP + L-glutamate + ADP + phosphate + 2 H(+). It carries out the reaction L-glutamine + H2O = L-glutamate + NH4(+). It catalyses the reaction UTP + NH4(+) + ATP = CTP + ADP + phosphate + 2 H(+). Its pathway is pyrimidine metabolism; CTP biosynthesis via de novo pathway; CTP from UDP: step 2/2. Allosterically activated by GTP, when glutamine is the substrate; GTP has no effect on the reaction when ammonia is the substrate. The allosteric effector GTP functions by stabilizing the protein conformation that binds the tetrahedral intermediate(s) formed during glutamine hydrolysis. Inhibited by the product CTP, via allosteric rather than competitive inhibition. Functionally, catalyzes the ATP-dependent amination of UTP to CTP with either L-glutamine or ammonia as the source of nitrogen. Regulates intracellular CTP levels through interactions with the four ribonucleotide triphosphates. This chain is CTP synthase, found in Methylocella silvestris (strain DSM 15510 / CIP 108128 / LMG 27833 / NCIMB 13906 / BL2).